The sequence spans 274 residues: F-box protein SKIP5 (274 aa).

The region spanning 32-79 is the F-box domain; that stretch reads LTSLNNLDDGCLMHILSFLSPIPDRYNTALVCHRWRYLACHPRLWLRV.

Part of a SCF (SKP1-cullin-F-box) protein ligase complex. Interacts with SKP1A/ASK1.

Its pathway is protein modification; protein ubiquitination. This chain is F-box protein SKIP5 (SKIP5), found in Arabidopsis thaliana (Mouse-ear cress).